Here is a 286-residue protein sequence, read N- to C-terminus: Polyamine aminopropyltransferase (286 aa).

In terms of domain architecture, PABS spans 5-238 (PLWHETLHDH…GIMTFAWASD (234 aa)). Position 33 (Gln33) interacts with S-methyl-5'-thioadenosine. 2 residues coordinate spermidine: His64 and Asp88. Residues Glu108 and 140–141 (DG) contribute to the S-methyl-5'-thioadenosine site. The Proton acceptor role is filled by Asp158. 158–161 (DCTD) provides a ligand contact to spermidine. Pro165 is a binding site for S-methyl-5'-thioadenosine.

The protein belongs to the spermidine/spermine synthase family. Homodimer or homotetramer.

The protein resides in the cytoplasm. The enzyme catalyses S-adenosyl 3-(methylsulfanyl)propylamine + putrescine = S-methyl-5'-thioadenosine + spermidine + H(+). It participates in amine and polyamine biosynthesis; spermidine biosynthesis; spermidine from putrescine: step 1/1. In terms of biological role, catalyzes the irreversible transfer of a propylamine group from the amino donor S-adenosylmethioninamine (decarboxy-AdoMet) to putrescine (1,4-diaminobutane) to yield spermidine. The chain is Polyamine aminopropyltransferase from Klebsiella pneumoniae (strain 342).